A 207-amino-acid chain; its full sequence is Ribosomal RNA small subunit methyltransferase G (207 aa).

S-adenosyl-L-methionine-binding positions include glycine 73, leucine 78, 124–125, and arginine 139; that span reads VE.

It belongs to the methyltransferase superfamily. RNA methyltransferase RsmG family.

Its subcellular location is the cytoplasm. It catalyses the reaction guanosine(527) in 16S rRNA + S-adenosyl-L-methionine = N(7)-methylguanosine(527) in 16S rRNA + S-adenosyl-L-homocysteine. Specifically methylates the N7 position of guanine in position 527 of 16S rRNA. This Klebsiella pneumoniae subsp. pneumoniae (strain ATCC 700721 / MGH 78578) protein is Ribosomal RNA small subunit methyltransferase G.